The primary structure comprises 513 residues: ATP synthase subunit alpha (513 aa).

169–176 (GDRQTGKT) is a binding site for ATP.

Belongs to the ATPase alpha/beta chains family. As to quaternary structure, F-type ATPases have 2 components, CF(1) - the catalytic core - and CF(0) - the membrane proton channel. CF(1) has five subunits: alpha(3), beta(3), gamma(1), delta(1), epsilon(1). CF(0) has three main subunits: a(1), b(2) and c(9-12). The alpha and beta chains form an alternating ring which encloses part of the gamma chain. CF(1) is attached to CF(0) by a central stalk formed by the gamma and epsilon chains, while a peripheral stalk is formed by the delta and b chains.

The protein resides in the cell inner membrane. It catalyses the reaction ATP + H2O + 4 H(+)(in) = ADP + phosphate + 5 H(+)(out). Functionally, produces ATP from ADP in the presence of a proton gradient across the membrane. The alpha chain is a regulatory subunit. The protein is ATP synthase subunit alpha of Salmonella paratyphi C (strain RKS4594).